The sequence spans 517 residues: DNA relaxase MbeA (517 aa).

Tyr19 serves as the catalytic O-(5'-phospho-DNA)-tyrosine intermediate. A divalent metal cation contacts are provided by His97, Glu104, and Asn106. 3 disordered regions span residues 281 to 310, 380 to 405, and 496 to 517; these read YSPV…QEGR, PSVR…VTQS, and SLER…SLGW. Residues 297 to 310 are compositionally biased toward basic and acidic residues; sequence GRGERGDDAAQEGR. Positions 496–510 are enriched in basic and acidic residues; sequence SLERERQPEIQERTL.

This sequence to E.coli MbaA and MbkA. Interacts with MbeB and MbeC to form the relaxosome. The cofactor is Mn(2+). It depends on Co(2+) as a cofactor. Requires Ni(2+) as cofactor.

It catalyses the reaction ATP-independent breakage of single-stranded DNA, followed by passage and rejoining.. Functionally, relaxase involved in plasmid ColE1 conjugative mobilization and is thus essential to promote the specific transfer of the plasmid during conjugation. First catalyzes the specific cleavage of one of the DNA strands at oriT, forming a covalent 5'-phosphotyrosine intermediate. The nic site corresponds to 5'-(1469)CTGG/CTTA(1462)-3' in the cleaved strand. The cleaved strand is then transferred through the dedicated type IV secretion apparatus. MbeA remains covalently linked at the 5' end of the strand, and once in the recipient cell, it probably catalyzes the rejoining of the two ends of the strand, re-forming the circular plasmid DNA. Is functional in vitro without a requirement for the conjugative accessory proteins. The protein is DNA relaxase MbeA (mbeA) of Escherichia coli.